We begin with the raw amino-acid sequence, 222 residues long: MRRPGAAALAAAALALAGCAQIPREPITQQPMSAMPPMPPAMQAPGSIYNPGYAGRPLFEDQRPRNVGDILTIVIAENINATKSSGANTNRQGNTSFDVPTAGFLGGLFNKANLSAQGANKFAATGGASAANTFNGTITVTVTNVLPNGNLVVSGEKQMLINQGNEFVRFSGIVNPNTISGQNSVYSTQVADARIEYSAKGYINEAETMGWLQRFFLNIAPW.

An N-terminal signal peptide occupies residues 1–18 (MRRPGAAALAAAALALAG). Cys19 is lipidated: N-palmitoyl cysteine. Cys19 carries the S-diacylglycerol cysteine lipid modification.

This sequence belongs to the FlgH family. The basal body constitutes a major portion of the flagellar organelle and consists of four rings (L,P,S, and M) mounted on a central rod.

The protein localises to the cell outer membrane. It localises to the bacterial flagellum basal body. Its function is as follows. Assembles around the rod to form the L-ring and probably protects the motor/basal body from shearing forces during rotation. The protein is Flagellar L-ring protein of Burkholderia mallei (strain ATCC 23344).